The sequence spans 485 residues: Glycogen synthase (485 aa).

Lysine 20 contacts ADP-alpha-D-glucose.

The protein belongs to the glycosyltransferase 1 family. Bacterial/plant glycogen synthase subfamily.

It carries out the reaction [(1-&gt;4)-alpha-D-glucosyl](n) + ADP-alpha-D-glucose = [(1-&gt;4)-alpha-D-glucosyl](n+1) + ADP + H(+). The protein operates within glycan biosynthesis; glycogen biosynthesis. In terms of biological role, synthesizes alpha-1,4-glucan chains using ADP-glucose. The polypeptide is Glycogen synthase (Vibrio vulnificus (strain CMCP6)).